Here is a 529-residue protein sequence, read N- to C-terminus: Transcription factor BIM1 (529 aa).

Disordered stretches follow at residues 1-91 (MELP…HVLP), 245-291 (KKES…RRSK), 425-450 (RVASSEAVEPSPSSRSQKEEEDEEVL), and 491-529 (AKQSSSSSFKDHEVREPVSRTRNDNVKQTRKPKRLKTGQ). Residues 76–86 (KPPPPAPPPPL) show a composition bias toward pro residues. Basic and acidic residues-rich tracts occupy residues 255–265 (HRVDLRVKADV) and 282–291 (SATEQRRRSK). Residues 276–326 (TPRSKHSATEQRRRSKINDRFQMLRQLIPNSDQKRDKASFLLEVIEYIQFL) enclose the bHLH domain. The segment covering 426-438 (VASSEAVEPSPSS) has biased composition (low complexity). The segment covering 499–517 (FKDHEVREPVSRTRNDNVK) has biased composition (basic and acidic residues). Residues 518–529 (QTRKPKRLKTGQ) are compositionally biased toward basic residues.

As to quaternary structure, homodimer. Interacts with BZR2/BES1 through both C-terminal and bHLH domains. Also interacts with LHW. In terms of tissue distribution, expressed constitutively in roots.

The protein localises to the nucleus. In terms of biological role, positive brassinosteroid-signaling protein. Transcription factor that bind specifically to the DNA sequence 5'-CANNTG-3'(E box). Can bind individually to the promoter as a homodimer or synergistically as a heterodimer with BZR2/BES1. Does not itself activate transcription but enhances BZR2/BES1-mediated target gene activation. The sequence is that of Transcription factor BIM1 (BIM1) from Arabidopsis thaliana (Mouse-ear cress).